Reading from the N-terminus, the 370-residue chain is 3-dehydroquinate synthase (370 aa).

Residues 112 to 116 (GVVGD), 136 to 137 (TS), K149, K158, and 176 to 179 (TLRT) contribute to the NAD(+) site. Positions 191, 254, and 276 each coordinate Zn(2+).

Belongs to the sugar phosphate cyclases superfamily. Dehydroquinate synthase family. It depends on Co(2+) as a cofactor. The cofactor is Zn(2+). NAD(+) serves as cofactor.

It localises to the cytoplasm. The catalysed reaction is 7-phospho-2-dehydro-3-deoxy-D-arabino-heptonate = 3-dehydroquinate + phosphate. It participates in metabolic intermediate biosynthesis; chorismate biosynthesis; chorismate from D-erythrose 4-phosphate and phosphoenolpyruvate: step 2/7. Functionally, catalyzes the conversion of 3-deoxy-D-arabino-heptulosonate 7-phosphate (DAHP) to dehydroquinate (DHQ). In Xanthomonas oryzae pv. oryzae (strain MAFF 311018), this protein is 3-dehydroquinate synthase.